The following is a 121-amino-acid chain: Small ribosomal subunit protein uS11 (121 aa).

This sequence belongs to the universal ribosomal protein uS11 family. In terms of assembly, part of the 30S ribosomal subunit. Interacts with proteins S7 and S18. Binds to IF-3.

Functionally, located on the platform of the 30S subunit, it bridges several disparate RNA helices of the 16S rRNA. Forms part of the Shine-Dalgarno cleft in the 70S ribosome. The polypeptide is Small ribosomal subunit protein uS11 (Mycoplasma pneumoniae (strain ATCC 29342 / M129 / Subtype 1) (Mycoplasmoides pneumoniae)).